The chain runs to 1681 residues: Meiosis regulator and mRNA stability factor 1 (1681 aa).

The region spanning 340–477 is the NYN domain; it reads IGVFWDIENC…ALLHHAHELI (138 aa). Disordered stretches follow at residues 576–595 and 638–717; these read VNET…PKKV and QMQS…DVVF. A compositionally biased stretch (polar residues) spans 638 to 647; sequence QMQSKSNKTS. A compositionally biased stretch (basic and acidic residues) spans 648 to 658; sequence QQEKDKKRNGD. Positions 659-690 are enriched in polar residues; sequence KQGTLSQSSPLCTNQMLQTARNVGTDNTASKS. The span at 692–715 shows a compositional bias: basic and acidic residues; it reads QKRDDTTRKSNADSQKEQKNKEDV. The region spanning 779-858 is the RRM domain; sequence ADIQIGNLDY…KRIQVSLATG (80 aa). 8 consecutive HTH OST-type domains span residues 863 to 937, 991 to 1067, 1087 to 1161, 1163 to 1238, 1247 to 1321, 1323 to 1398, 1399 to 1472, and 1474 to 1548; these read SLSL…SPMG, SLKT…HNKP, QLIQ…LTHR, QVKR…IPKR, RTKQ…LTEM, RIKA…INRK, SLRS…SVQL, and SLYV…LKND. Residues 1637-1648 show a composition bias toward polar residues; that stretch reads EPSTQNICPQES. The disordered stretch occupies residues 1637–1662; that stretch reads EPSTQNICPQESKSTKELPESPVKRQ. Residues 1649–1659 are compositionally biased toward basic and acidic residues; that stretch reads KSTKELPESPV.

The protein resides in the peroxisome. In terms of biological role, essential regulator of oogenesis required for female meiotic progression to repress transposable elements and preventing their mobilization, which is essential for the germline integrity. The sequence is that of Meiosis regulator and mRNA stability factor 1 from Xenopus tropicalis (Western clawed frog).